A 61-amino-acid polypeptide reads, in one-letter code: Large ribosomal subunit protein uL30 (61 aa).

Belongs to the universal ribosomal protein uL30 family. In terms of assembly, part of the 50S ribosomal subunit.

The sequence is that of Large ribosomal subunit protein uL30 from Chromohalobacter salexigens (strain ATCC BAA-138 / DSM 3043 / CIP 106854 / NCIMB 13768 / 1H11).